Here is a 241-residue protein sequence, read N- to C-terminus: Large ribosomal subunit protein uL2 (241 aa).

The segment at 201-241 is disordered; that stretch reads VDHPHGGGNRQHPGRPTTVSRHAPPGRKVGSIAAKRTGLKR.

This sequence belongs to the universal ribosomal protein uL2 family. In terms of assembly, part of the 50S ribosomal subunit. Forms a bridge to the 30S subunit in the 70S ribosome.

Its function is as follows. One of the primary rRNA binding proteins. Required for association of the 30S and 50S subunits to form the 70S ribosome, for tRNA binding and peptide bond formation. It has been suggested to have peptidyltransferase activity; this is somewhat controversial. Makes several contacts with the 16S rRNA in the 70S ribosome. This Methanobrevibacter smithii (strain ATCC 35061 / DSM 861 / OCM 144 / PS) protein is Large ribosomal subunit protein uL2.